We begin with the raw amino-acid sequence, 792 residues long: Alpha-1,6-mannosylglycoprotein 6-beta-N-acetylglucosaminyltransferase B (792 aa).

The Cytoplasmic segment spans residues M1–L24. Residues F25 to F45 traverse the membrane as a helical; Signal-anchor for type II membrane protein segment. Over S46–L792 the chain is Lumenal. An N-linked (GlcNAc...) asparagine glycan is attached at N127. 9 disulfides stabilise this stretch: C157–C195, C168–C208, C184–C353, C387–C644, C700–C775, C704–C777, C711–C764, C732–C753, and C788–C791.

It belongs to the glycosyltransferase 18 family. Requires Mn(2+) as cofactor. Predominantly expressed in brain. Expressed in all areas of the adult and fetal brain. Also expressed at much lower levels in testis, spleen and thymus.

The protein localises to the golgi apparatus membrane. It carries out the reaction N(4)-{beta-D-GlcNAc-(1-&gt;2)-[beta-D-GlcNAc-(1-&gt;4)]-alpha-D-Man-(1-&gt;3)-[beta-D-GlcNAc-(1-&gt;2)-alpha-D-Man-(1-&gt;6)]-beta-D-Man-(1-&gt;4)-beta-D-GlcNAc-(1-&gt;4)-beta-D-GlcNAc}-L-asparaginyl-[protein] + UDP-N-acetyl-alpha-D-glucosamine = N(4)-{beta-D-GlcNAc-(1-&gt;2)-[beta-D-GlcNAc-(1-&gt;4)]-alpha-D-Man-(1-&gt;3)-[beta-D-GlcNAc-(1-&gt;2)-[beta-D-GlcNAc-(1-&gt;6)]-alpha-D-Man-(1-&gt;6)]-beta-D-Man-(1-&gt;4)-beta-D-GlcNAc-(1-&gt;4)-beta-D-GlcNAc}-L-asparaginyl-[protein] + UDP + H(+). The enzyme catalyses 3-O-[N-acetyl-beta-D-glucosaminyl-(1-&gt;2)-alpha-D-mannosyl]-L-seryl-[protein] + UDP-N-acetyl-alpha-D-glucosamine = O(3)-{N-acetyl-beta-D-glucosaminyl-(1-&gt;2)-[N-acetyl-beta-D-glucosaminyl-(1-&gt;6)]-alpha-D-mannosyl}-L-seryl-[protein] + UDP + H(+). It catalyses the reaction 3-O-[N-acetyl-beta-D-glucosaminyl-(1-&gt;2)-alpha-D-mannosyl]-L-threonyl-[protein] + UDP-N-acetyl-alpha-D-glucosamine = O(3)-{N-acetyl-beta-D-glucosaminyl-(1-&gt;2)-[N-acetyl-beta-D-glucosaminyl-(1-&gt;6)]-alpha-D-mannosyl}-L-threonyl-[protein] + UDP + H(+). The protein operates within protein modification; protein glycosylation. Its function is as follows. Glycosyltransferase that acts on alpha-linked mannose of N-glycans and O-mannosyl glycans. Catalyzes the transfer of N-acetylglucosamine (GlcNAc) to the beta 1-6 linkage of the mannose residue of GlcNAc-beta1,2-Man-alpha on both the alpha1,3- and alpha1,6-linked mannose arms in the core structure of N-glycan. Also acts on the GlcNAc-beta1,2-Man-alpha1-Ser/Thr moiety, forming a 2,6-branched structure in brain O-mannosyl glycan. Plays an active role in modulating integrin and laminin-dependent adhesion and migration of neuronal cells via its activity in the O-mannosyl glycan pathway. The sequence is that of Alpha-1,6-mannosylglycoprotein 6-beta-N-acetylglucosaminyltransferase B (MGAT5B) from Homo sapiens (Human).